The primary structure comprises 163 residues: Translation initiation factor IF-3-like (163 aa).

The protein belongs to the IF-3 family.

The chain is Translation initiation factor IF-3-like from Nostoc sp. (strain PCC 7120 / SAG 25.82 / UTEX 2576).